Consider the following 318-residue polypeptide: Olfactory receptor 56A1 (318 aa).

Topologically, residues 1 to 32 (MIQPMASPSNSSTVPVSEFLLICFPNFQSWQH) are extracellular. The N-linked (GlcNAc...) asparagine glycan is linked to N10. A helical transmembrane segment spans residues 33–53 (WLSLPLSLLFLLAMGANTTLL). Over 54 to 61 (ITIQLEAS) the chain is Cytoplasmic. Residues 62-82 (LHQPLYYLLSLLSLLDIVLCL) form a helical membrane-spanning segment. Residues 83–106 (TVIPKVLAIFWYDLRSISFPACFL) are Extracellular-facing. A disulfide bond links C104 and C196. Residues 107–127 (QMFIMNSFLPMESCTFMVMAY) traverse the membrane as a helical segment. Residues 128–146 (DRYVAICHPLRYPSIITNQ) are Cytoplasmic-facing. Residues 147–167 (FVAKASVFIVVRNALLTAPIP) form a helical membrane-spanning segment. Residues 168-203 (ILTSLLHYCGENVIENCICANLSVSRLSCDNFTLNR) are Extracellular-facing. N188 and N198 each carry an N-linked (GlcNAc...) asparagine glycan. The helical transmembrane segment at 204-224 (IYQFVAGWTLLGSDLFLIFLS) threads the bilayer. The Cytoplasmic portion of the chain corresponds to 225–244 (YTFILRAVLRFKAEGAAVKA). Residues 245 to 265 (LSTCGSHFILILFFSTILLVV) form a helical membrane-spanning segment. The Extracellular portion of the chain corresponds to 266 to 280 (VLTNVARKKVPMDIL). Residues 281 to 301 (ILLNVLHHLIPPALNPIVYGV) form a helical membrane-spanning segment. The Cytoplasmic portion of the chain corresponds to 302 to 318 (RTKEIKQGIQKLLQRGR).

It belongs to the G-protein coupled receptor 1 family.

Its subcellular location is the cell membrane. Odorant receptor. The polypeptide is Olfactory receptor 56A1 (OR56A1) (Homo sapiens (Human)).